The primary structure comprises 340 residues: Glyceraldehyde-3-phosphate dehydrogenase (340 aa).

NAD(+) is bound by residues 12–13 (RI), Asp40, Lys85, and Ser128. D-glyceraldehyde 3-phosphate-binding positions include 158 to 160 (SCT), Thr189, Arg204, 217 to 218 (TG), and Arg240. Cys159 acts as the Nucleophile in catalysis. Lys257 is covalently cross-linked (Isoglutamyl lysine isopeptide (Lys-Gln) (interchain with Q-Cter in protein Pup)). Asn321 contacts NAD(+).

This sequence belongs to the glyceraldehyde-3-phosphate dehydrogenase family. As to quaternary structure, homotetramer.

Its subcellular location is the cytoplasm. The catalysed reaction is D-glyceraldehyde 3-phosphate + phosphate + NAD(+) = (2R)-3-phospho-glyceroyl phosphate + NADH + H(+). It functions in the pathway carbohydrate degradation; glycolysis; pyruvate from D-glyceraldehyde 3-phosphate: step 1/5. Its function is as follows. Catalyzes the oxidative phosphorylation of glyceraldehyde 3-phosphate (G3P) to 1,3-bisphosphoglycerate (BPG) using the cofactor NAD. The first reaction step involves the formation of a hemiacetal intermediate between G3P and a cysteine residue, and this hemiacetal intermediate is then oxidized to a thioester, with concomitant reduction of NAD to NADH. The reduced NADH is then exchanged with the second NAD, and the thioester is attacked by a nucleophilic inorganic phosphate to produce BPG. The polypeptide is Glyceraldehyde-3-phosphate dehydrogenase (gapA) (Mycolicibacterium smegmatis (strain ATCC 700084 / mc(2)155) (Mycobacterium smegmatis)).